Reading from the N-terminus, the 579-residue chain is MSASSLLEQRPKGQGNKVQNGSVHQKDGLNDDDFEPYLSPQARPNNAYTAMSDSYLPSYYSPSIGFSYSLGEAAWSTGGDTAMPYLTSYGQLSNGEPHFLPDAMFGQPGALGSTPFLGQHGFNFFPSGIDFSAWGNNSSQGQSTQSSGYSSNYAYAPSSLGGAMIDGQSAFANETLNKAPGMNTIDQGMAALKLGSTEVASNVPKVVGSAVGSGSITSNIVASNSLPPATIAPPKPASWADIASKPAKQQPKLKTKNGIAGSSLPPPPIKHNMDIGTWDNKGPVAKAPSQALVQNIGQPTQGSPQHVGQQANNSPPVAQASVGQQTQPLPPPPPQPAQLSVQQQAAQPTRWVAPRNRGSGFGHNGVDGNGVGQSQAGSGSTPSEPHPVLEKLRSINNYNPKDFDWNLKHGRVFIIKSYSEDDIHRSIKYNIWCSTEHGNKRLDAAYRSMNGKGPVYLLFSVNGSGHFCGVAEMKSAVDYNTCAGVWSQDKWKGRFDVRWIFVKDVPNSQLRHIRLENNENKPVTNSRDTQEVPLEKAKQVLKIIASYKHTTSIFDDFSHYEKRQEEEESVKKERQGRGK.

Residues 1–45 form a disordered region; sequence MSASSLLEQRPKGQGNKVQNGSVHQKDGLNDDDFEPYLSPQARPN. Ser-2 is modified (N-acetylserine). Phosphoserine is present on residues Ser-2, Ser-4, Ser-5, Ser-22, Ser-39, and Ser-196. A localization to mRNA processing bodies (P-bodies) region spans residues 2–384; sequence SASSLLEQRP…QAGSGSTPSE (383 aa). The interval 247–387 is disordered; sequence AKQQPKLKTK…SGSTPSEPHP (141 aa). Polar residues predominate over residues 291–316; sequence ALVQNIGQPTQGSPQHVGQQANNSPP. The span at 337–349 shows a compositional bias: low complexity; the sequence is AQLSVQQQAAQPT. Ser-359 carries the post-translational modification Phosphoserine. Positions 359–371 are enriched in gly residues; it reads SGFGHNGVDGNGV. Residues 372-383 show a composition bias toward polar residues; that stretch reads GQSQAGSGSTPS. Positions 385–579 are interaction with m6A-containing mRNAs; the sequence is PHPVLEKLRS…VKKERQGRGK (195 aa). Phosphoserine is present on Ser-394. A YTH domain is found at 410-544; sequence GRVFIIKSYS…EKAKQVLKII (135 aa). Residues 416 to 418, Asp-422, 432 to 433, Asn-462, Trp-486, and Trp-491 each bind RNA; these read KSY and WC.

This sequence belongs to the YTHDF family. YTHDF2 subfamily. As to quaternary structure, interacts with CNOT1; interaction is direct and promotes recruitment of the CCR4-NOT complex. Interacts with YTHDF3. Interacts with RIDA/HRSP12; interaction leads to recruitment of the ribonuclease P/MRP complex. Ubiquitinated by the SCF(SKP2) complex, leading to its degradation.

Its subcellular location is the cytoplasm. The protein resides in the cytosol. The protein localises to the P-body. It is found in the stress granule. It localises to the nucleus. Functionally, specifically recognizes and binds N6-methyladenosine (m6A)-containing RNAs, and regulates their stability. M6A is a modification present at internal sites of mRNAs and some non-coding RNAs and plays a role in mRNA stability and processing. Acts as a regulator of mRNA stability by promoting degradation of m6A-containing mRNAs via interaction with the CCR4-NOT and ribonuclease P/MRP complexes, depending on the context. The YTHDF paralogs (YTHDF1, YTHDF2 and YTHDF3) share m6A-containing mRNAs targets and act redundantly to mediate mRNA degradation and cellular differentiation. M6A-containing mRNAs containing a binding site for RIDA/HRSP12 (5'-GGUUC-3') are preferentially degraded by endoribonucleolytic cleavage: cooperative binding of RIDA/HRSP12 and YTHDF2 to transcripts leads to recruitment of the ribonuclease P/MRP complex. Other m6A-containing mRNAs undergo deadenylation via direct interaction between YTHDF2 and CNOT1, leading to recruitment of the CCR4-NOT and subsequent deadenylation of m6A-containing mRNAs. Required maternally to regulate oocyte maturation: probably acts by binding to m6A-containing mRNAs, thereby regulating maternal transcript dosage during oocyte maturation, which is essential for the competence of oocytes to sustain early zygotic development. Also required during spermatogenesis: regulates spermagonial adhesion by promoting degradation of m6A-containing transcripts coding for matrix metallopeptidases. Also involved in hematopoietic stem cells specification by binding to m6A-containing mRNAs, leading to promote their degradation. Also acts as a regulator of neural development by promoting m6A-dependent degradation of neural development-related mRNA targets. Inhibits neural specification of induced pluripotent stem cells by binding to methylated neural-specific mRNAs and promoting their degradation, thereby restraining neural differentiation. Regulates circadian regulation of hepatic lipid metabolism: acts by promoting m6A-dependent degradation of PPARA transcripts. Regulates the innate immune response to infection by inhibiting the type I interferon response: acts by binding to m6A-containing IFNB transcripts and promoting their degradation. May also act as a promoter of cap-independent mRNA translation following heat shock stress: upon stress, relocalizes to the nucleus and specifically binds mRNAs with some m6A methylation mark at their 5'-UTR, protecting demethylation of mRNAs by FTO, thereby promoting cap-independent mRNA translation. Regulates mitotic entry by promoting the phase-specific m6A-dependent degradation of WEE1 transcripts. Promotes formation of phase-separated membraneless compartments, such as P-bodies or stress granules, by undergoing liquid-liquid phase separation upon binding to mRNAs containing multiple m6A-modified residues: polymethylated mRNAs act as a multivalent scaffold for the binding of YTHDF proteins, juxtaposing their disordered regions and thereby leading to phase separation. The resulting mRNA-YTHDF complexes then partition into different endogenous phase-separated membraneless compartments, such as P-bodies, stress granules or neuronal RNA granules. May also recognize and bind RNAs modified by C5-methylcytosine (m5C) and act as a regulator of rRNA processing. In Macaca fascicularis (Crab-eating macaque), this protein is YTH domain-containing family protein 2.